Reading from the N-terminus, the 1638-residue chain is Non-structural polyprotein 1AB (1638 aa).

Residues 130-222 (LVHQVMEKTR…KEKENALVSV (93 aa)) adopt a coiled-coil conformation. Helical transmembrane passes span 220 to 240 (VSVG…FGLI), 379 to 398 (VMSY…VLAG), 407 to 427 (APFI…CVAV), 437 to 457 (FILF…LLWL), 479 to 499 (ALVY…GVTL), and 507 to 527 (ILMF…CTTI). Residues histidine 600, aspartate 632, and serine 697 each act as charge relay system; for serine protease activity in the active site. A coiled-coil region spans residues 758 to 788 (KVSHAAILKELEELREEVQFLKKKCVTYDDY). Tyrosine 834 is subject to O-(5'-phospho-RNA)-tyrosine. The 135-residue stretch at 1381–1515 (RYFVEMDWTR…SIRKGFVEYE (135 aa)) folds into the RdRp catalytic domain.

Belongs to the astroviridae polyprotein 1AB family. As to quaternary structure, monomer. Post-translationally, cleaved by the viral and host proteases. The protease is probably autocatalytically cleaved.

It localises to the host membrane. It catalyses the reaction RNA(n) + a ribonucleoside 5'-triphosphate = RNA(n+1) + diphosphate. Functionally, responsible for the cleavage of the polyprotein into functional products. In terms of biological role, protein covalently attached to the 5' extremity of the genomic and subgenomic RNAs. It may serve as a primer for the replicase. The polypeptide is Non-structural polyprotein 1AB (ORF1) (Turkey astrovirus 2 (TAstV-2)).